Here is a 349-residue protein sequence, read N- to C-terminus: Fe(3+) ions import ATP-binding protein FbpC (349 aa).

Residues 4–236 form the ABC transporter domain; it reads LDFNKIGKSY…PIDEPTATFL (233 aa). An ATP-binding site is contributed by 36 to 43; it reads GPSGSGKT.

The protein belongs to the ABC transporter superfamily. Fe(3+) ion importer (TC 3.A.1.10) family. The complex is composed of two ATP-binding proteins (FbpC), two transmembrane proteins (FbpB) and a solute-binding protein (FbpA).

Its subcellular location is the cell inner membrane. The enzyme catalyses Fe(3+)(out) + ATP + H2O = Fe(3+)(in) + ADP + phosphate + H(+). In terms of biological role, part of the ABC transporter complex FbpABC involved in Fe(3+) ions import. Responsible for energy coupling to the transport system. The polypeptide is Fe(3+) ions import ATP-binding protein FbpC (Yersinia enterocolitica).